Here is a 481-residue protein sequence, read N- to C-terminus: RuvB-like helicase 2 (481 aa).

73 to 80 (GEPSTGKT) contacts ATP. The disordered stretch occupies residues 453–481 (EEVERDPAAGGGAKRRVEGGGGDAQPMEH).

This sequence belongs to the RuvB family. Forms homohexameric rings. May form a dodecamer with rept made of two stacked hexameric rings. Component of the chromatin remodeling Ino80 complex. Interacts with Myc and pont. As to expression, higher expression occurs in primordia of mesoderm, anterior and posterior midgut and cephalic furrow early in gastrulation, as well as in endoderm and mesoderm lineages during germ band extension. Later in development expression is only maintained in endoderm cells. Expressed in thoracic and abdominal segment neural precursors of all embryonic chordotonal organs.

The protein localises to the nucleus. It carries out the reaction ATP + H2O = ADP + phosphate + H(+). Its function is as follows. Acts as a transcriptional coactivator in Wg signaling caused by altered arm signaling. Pont and rept interfere antagonistically with nuclear arm signaling function, and are required to enhance or reduce arm activity, respectively. Also an essential cofactor for the normal function of Myc; required for cellular proliferation and growth. Functionally, proposed core component of the chromatin remodeling Ino80 complex which is involved in transcriptional regulation, DNA replication and probably DNA repair. The protein is RuvB-like helicase 2 of Drosophila melanogaster (Fruit fly).